Consider the following 441-residue polypeptide: Capsid protein (441 aa).

Residues 26–63 are disordered; sequence DSKKKQPIYQNSSESEESETENKNFIYDFSSEEDFEEP. The Nuclear localization signal signature appears at 77–79; the sequence is KRK. The CCHC-type zinc finger occupies 381–398; it reads CQCWLCHEEGHYANECPK.

Belongs to the caulimoviridae capsid protein family. Interacts (via nuclear localization signal) with host importin alpha.

The protein localises to the virion. Its subcellular location is the host nucleus. Functionally, self assembles to form an icosahedral capsid, about 50 nm in diameter, nm, composed of 420 subunits of the viral capsid protein. The capsid encapsulates the genomic dsDNA. Following virus entry into host cell, provides nuclear import of the viral genome. Virus particles do not enter the nucleus, but dock at the nuclear membrane through the interaction with host importins. The chain is Capsid protein from Soybean chlorotic mottle virus.